We begin with the raw amino-acid sequence, 906 residues long: Protein translocase subunit SecA (906 aa).

ATP-binding positions include Q87, 105–109 (GEGKT), and D521. Residues 849-865 (STATAAEPAPEASQSQS) are compositionally biased toward low complexity. The segment at 849–897 (STATAAEPAPEASQSQSTNDATASQNPPITEVEASKVGRNQPCPCGSGK) is disordered. Residues 866-876 (TNDATASQNPP) are compositionally biased toward polar residues. Zn(2+) contacts are provided by C891, C893, C902, and C903.

This sequence belongs to the SecA family. Monomer and homodimer. Part of the essential Sec protein translocation apparatus which comprises SecA, SecYEG and auxiliary proteins SecDF-YajC and YidC. Requires Zn(2+) as cofactor.

Its subcellular location is the cell inner membrane. It is found in the cytoplasm. It catalyses the reaction ATP + H2O + cellular proteinSide 1 = ADP + phosphate + cellular proteinSide 2.. Part of the Sec protein translocase complex. Interacts with the SecYEG preprotein conducting channel. Has a central role in coupling the hydrolysis of ATP to the transfer of proteins into and across the cell membrane, serving both as a receptor for the preprotein-SecB complex and as an ATP-driven molecular motor driving the stepwise translocation of polypeptide chains across the membrane. The sequence is that of Protein translocase subunit SecA from Dichelobacter nodosus (strain VCS1703A).